A 739-amino-acid chain; its full sequence is Nucleoprotein (739 aa).

Residues V334 to L363 adopt a coiled-coil conformation. Residues P415–H646 are disordered. Composition is skewed to low complexity over residues S449–V458 and K504–G514. The span at R520–V530 shows a compositional bias: polar residues. Residues E567–T579 show a composition bias toward acidic residues. Basic and acidic residues predominate over residues Y611–D638.

The protein belongs to the filoviruses nucleoprotein family. As to quaternary structure, homooligomer. Homomultimerizes to form the nucleocapsid. Binds to viral genomic RNA. Interacts with VP35 and VP30 to form the nucleocapsid. Interacts with host PPP2R5C; this interaction leads to VP30 dephosphorylation and viral transcription. Interacts with VP24; this interaction facilitates nucleocapsid assembly and genome packaging. Interacts with matrix protein VP40; this interaction allows recruitment of the nucleocapsid into progeny virions. Interacts with host STAU1. Interacts with host NXF1 (via RNA-binding domain); this interaction recruits NXF1 to the inclusion bodies were viral replication takes place, probably to export viral mRNA-NXF1 complexes from these sites. Interacts with host CCDC92; this interaction sequesters NP in the host cytoplasm. Interacts with host TRIM14. Phosphorylated and O-glycosylated by host. Acetylated by host EP300 in vitro.

Its subcellular location is the virion. The protein resides in the host cytoplasm. Functionally, oligomerizes into helical capsid to encapsidate the viral genome, protecting it from nucleases and the cellular innate immune response. VP35 binds to and stabilizes monomeric NP, keeping it soluble. Upon virus replication, NP is recruited to bind cooperatively viral genomic RNA and VP35 is released. The encapsidated genomic RNA is termed the nucleocapsid and serves as template for transcription and replication. The nucleocapsid is helical with a pitch of 10.81 NP per turn and a diameter of about 22nm. Each NP binds to six nucleotides of viral genomic RNA, three being exposed to the solvant and three hidden into the nucleocapsid. Also recruits host PPP2R5C phosphatase to dephosphorylate VP30 and thereby promote viral transcription. Upon virion assembly and budding, NP binds to VP24 and possibly host STAU1. This chain is Nucleoprotein (NP), found in Epomops franqueti (Franquet's epauletted fruit bat).